A 145-amino-acid polypeptide reads, in one-letter code: Bacilliredoxin GK2368 (145 aa).

The protein belongs to the bacilliredoxin family.

The chain is Bacilliredoxin GK2368 from Geobacillus kaustophilus (strain HTA426).